A 440-amino-acid polypeptide reads, in one-letter code: Probable D-serine dehydratase (440 aa).

The residue at position 120 (lysine 120) is an N6-(pyridoxal phosphate)lysine.

It belongs to the serine/threonine dehydratase family. DsdA subfamily. It depends on pyridoxal 5'-phosphate as a cofactor.

The enzyme catalyses D-serine = pyruvate + NH4(+). The sequence is that of Probable D-serine dehydratase from Shouchella clausii (strain KSM-K16) (Alkalihalobacillus clausii).